The sequence spans 257 residues: tRNA pseudouridine synthase A (257 aa).

Asp53 (nucleophile) is an active-site residue. Residue Tyr111 coordinates substrate.

Belongs to the tRNA pseudouridine synthase TruA family. As to quaternary structure, homodimer.

The catalysed reaction is uridine(38/39/40) in tRNA = pseudouridine(38/39/40) in tRNA. Formation of pseudouridine at positions 38, 39 and 40 in the anticodon stem and loop of transfer RNAs. The chain is tRNA pseudouridine synthase A from Xylella fastidiosa (strain M12).